We begin with the raw amino-acid sequence, 746 residues long: Protein C-mannosyl-transferase DPY19L1 (746 aa).

Residues 1–68 are disordered; it reads MVLQARSKHR…RAGTAAPAPD (68 aa). Phosphoserine is present on residues Ser-28 and Ser-31. Residues 59–68 show a composition bias toward low complexity; that stretch reads RAGTAAPAPD. Transmembrane regions (helical) follow at residues 137–159, 227–247, 257–279, 307–325, 331–350, 357–374, 380–396, 405–425, 481–501, 520–540, and 562–582; these read LYYS…WMIM, ACFY…LFFI, LGGV…VMWT, LCRG…FMLP, FVLL…GYID, IIYM…LMFG, TSYY…MLAM, VSEL…TVIL, LLLP…FNDM, GELV…VLIM, and LFGW…ILAA.

The protein belongs to the dpy-19 family.

It localises to the endoplasmic reticulum membrane. It carries out the reaction L-tryptophyl-[protein] + a di-trans,poly-cis-dolichyl beta-D-mannosyl phosphate = C-alpha-D-mannosyl-L-tryptophyl-[protein] + a di-trans,poly-cis-dolichyl phosphate + H(+). It functions in the pathway protein modification; protein glycosylation. C-mannosyltransferase that mediates the C-mannosylation tryptophan residues on target proteins. The reaction occurs on the luminal side of the endoplasmic reticulum and involves the transfer of a mannose unit from a dolichylphosphate mannose (Dol-P-Man) donor to an acceptor protein containing a WxxW consensus sequence. C-mannosylates the first two tryptophans in the WxxWxxWxxC sequence motif in thrombospondin (TSP) type-1 repeats of UNC5A. Regulates neurite extension during development. The protein is Protein C-mannosyl-transferase DPY19L1 (Dpy19l1) of Mus musculus (Mouse).